Reading from the N-terminus, the 276-residue chain is Formamidopyrimidine-DNA glycosylase (276 aa).

Pro-2 serves as the catalytic Schiff-base intermediate with DNA. The active-site Proton donor is the Glu-3. Lys-58 functions as the Proton donor; for beta-elimination activity in the catalytic mechanism. His-92, Arg-111, and Lys-154 together coordinate DNA. The FPG-type zinc finger occupies 239–273 (QVYGHAGEECSSCGTILEKIKVNGRGTTFCPHCQV). Residue Arg-263 is the Proton donor; for delta-elimination activity of the active site.

It belongs to the FPG family. Monomer. Requires Zn(2+) as cofactor.

The enzyme catalyses Hydrolysis of DNA containing ring-opened 7-methylguanine residues, releasing 2,6-diamino-4-hydroxy-5-(N-methyl)formamidopyrimidine.. The catalysed reaction is 2'-deoxyribonucleotide-(2'-deoxyribose 5'-phosphate)-2'-deoxyribonucleotide-DNA = a 3'-end 2'-deoxyribonucleotide-(2,3-dehydro-2,3-deoxyribose 5'-phosphate)-DNA + a 5'-end 5'-phospho-2'-deoxyribonucleoside-DNA + H(+). Functionally, involved in base excision repair of DNA damaged by oxidation or by mutagenic agents. Acts as a DNA glycosylase that recognizes and removes damaged bases. Has a preference for oxidized purines, such as 7,8-dihydro-8-oxoguanine (8-oxoG). Has AP (apurinic/apyrimidinic) lyase activity and introduces nicks in the DNA strand. Cleaves the DNA backbone by beta-delta elimination to generate a single-strand break at the site of the removed base with both 3'- and 5'-phosphates. The polypeptide is Formamidopyrimidine-DNA glycosylase (Lactobacillus gasseri (strain ATCC 33323 / DSM 20243 / BCRC 14619 / CIP 102991 / JCM 1131 / KCTC 3163 / NCIMB 11718 / NCTC 13722 / AM63)).